The primary structure comprises 92 residues: Small ribosomal subunit protein uS19 (92 aa).

It belongs to the universal ribosomal protein uS19 family.

Protein S19 forms a complex with S13 that binds strongly to the 16S ribosomal RNA. This Sinorhizobium medicae (strain WSM419) (Ensifer medicae) protein is Small ribosomal subunit protein uS19.